A 327-amino-acid chain; its full sequence is S-adenosylmethionine/S-adenosylhomocysteine transporter (327 aa).

10 helical membrane-spanning segments follow: residues 22-42 (CDMA…SFAL), 53-73 (LFVT…LLLC), 85-105 (IMPI…LEFI), 114-134 (TACF…YVQL), 143-163 (LGGL…GGSE), 165-185 (VAEW…ATCL), 202-222 (SLSM…LSLI), 240-260 (LFLQ…YNLF), 271-291 (FLSF…WLLL), and 294-314 (SFPP…RLIY). Positions 34–157 (FIWSSSFALS…LGLVSYLVYL (124 aa)) constitute an EamA 1 domain. Positions 189 to 313 (GWTLLRKLGR…GFMVLGCRLI (125 aa)) constitute an EamA 2 domain.

Belongs to the drug/metabolite transporter (DMT) superfamily. 10 TMS drug/metabolite exporter (DME) (TC 2.A.7.3) family.

It localises to the cell membrane. CCCP treatment reduces SAM intracellular uptake by 50%. Its function is as follows. Transports S-adenosylmethionine (SAM) and S-adenosylhomocysteine (SAH). Allows bacteria to acquire SAM from the eukaryotic host cell and to likely remove the toxic by-product SAH. The sequence is that of S-adenosylmethionine/S-adenosylhomocysteine transporter from Chlamydia trachomatis serovar L2 (strain ATCC VR-902B / DSM 19102 / 434/Bu).